Consider the following 135-residue polypeptide: Histone H2A.4 (135 aa).

The protein belongs to the histone H2A family. In terms of assembly, the nucleosome is a histone octamer containing two molecules each of H2A, H2B, H3 and H4 assembled in one H3-H4 heterotetramer and two H2A-H2B heterodimers. The octamer wraps approximately 147 bp of DNA. As to expression, expressed preferentially in meristematic tissues of young seedlings, in stigma and ovary but not in pollen.

It is found in the nucleus. Its subcellular location is the chromosome. Functionally, core component of nucleosome. Nucleosomes wrap and compact DNA into chromatin, limiting DNA accessibility to the cellular machineries which require DNA as a template. Histones thereby play a central role in transcription regulation, DNA repair, DNA replication and chromosomal stability. DNA accessibility is regulated via a complex set of post-translational modifications of histones, also called histone code, and nucleosome remodeling. This Triticum aestivum (Wheat) protein is Histone H2A.4 (TH254).